The primary structure comprises 339 residues: Glycerol-3-phosphate dehydrogenase [NAD(P)+] (339 aa).

Serine 15, tyrosine 16, histidine 36, and lysine 110 together coordinate NADPH. Sn-glycerol 3-phosphate-binding residues include lysine 110, glycine 139, and threonine 141. Alanine 143 contributes to the NADPH binding site. Lysine 195, aspartate 248, serine 258, arginine 259, and asparagine 260 together coordinate sn-glycerol 3-phosphate. Lysine 195 functions as the Proton acceptor in the catalytic mechanism. Arginine 259 serves as a coordination point for NADPH. Valine 283 and glutamate 285 together coordinate NADPH.

The protein belongs to the NAD-dependent glycerol-3-phosphate dehydrogenase family.

It is found in the cytoplasm. The enzyme catalyses sn-glycerol 3-phosphate + NAD(+) = dihydroxyacetone phosphate + NADH + H(+). It catalyses the reaction sn-glycerol 3-phosphate + NADP(+) = dihydroxyacetone phosphate + NADPH + H(+). Its pathway is membrane lipid metabolism; glycerophospholipid metabolism. Catalyzes the reduction of the glycolytic intermediate dihydroxyacetone phosphate (DHAP) to sn-glycerol 3-phosphate (G3P), the key precursor for phospholipid synthesis. This Cronobacter sakazakii (strain ATCC BAA-894) (Enterobacter sakazakii) protein is Glycerol-3-phosphate dehydrogenase [NAD(P)+].